An 849-amino-acid chain; its full sequence is Putative pentatricopeptide repeat-containing protein At5g08490 (849 aa).

PPR repeat units lie at residues 20–54, 55–89, 121–155, 156–187, 188–222, 223–260, 262–296, 297–327, 329–363, 365–399, 400–430, 431–465, 469–499, 501–531, 532–566, 567–597, 601–631, 632–666, 667–702, and 703–733; these read DHRV…GHIA, CSEV…DPVV, SSVT…GLEK, DTLV…IADK, DVVS…PTEP, NYAT…SWLQ, HVFV…DLVS, WNVV…GDVS, DSVT…SYLL, DTSV…DIIS, WNAI…AITL, DSVT…GLLH, EPKL…LSER, TLVS…MSTT, DLTT…GMRP, NTVT…IIRG, DIRL…DARR, DLVM…NIKP, DHVF…GMKP, and TMEQ…MPVE. Residues 738–813 are type E motif; sequence IWGTLLRACT…PAGCSWLEVD (76 aa). Residues 814-844 form a type E(+) motif region; that stretch reads GQRNVFVSGDCSHPRRDSIFDLVNALYLQMK.

Belongs to the PPR family. PCMP-E subfamily.

The chain is Putative pentatricopeptide repeat-containing protein At5g08490 (PCMP-E32) from Arabidopsis thaliana (Mouse-ear cress).